The sequence spans 177 residues: Large ribosomal subunit protein uL6 (177 aa).

Belongs to the universal ribosomal protein uL6 family. Part of the 50S ribosomal subunit.

Functionally, this protein binds to the 23S rRNA, and is important in its secondary structure. It is located near the subunit interface in the base of the L7/L12 stalk, and near the tRNA binding site of the peptidyltransferase center. The chain is Large ribosomal subunit protein uL6 from Bradyrhizobium sp. (strain ORS 278).